The chain runs to 419 residues: Serine hydroxymethyltransferase (419 aa).

(6S)-5,6,7,8-tetrahydrofolate contacts are provided by residues leucine 121 and 125 to 127 (GHL). The residue at position 229 (lysine 229) is an N6-(pyridoxal phosphate)lysine. A (6S)-5,6,7,8-tetrahydrofolate-binding site is contributed by 354 to 356 (SPF).

This sequence belongs to the SHMT family. As to quaternary structure, homodimer. Requires pyridoxal 5'-phosphate as cofactor.

The protein resides in the cytoplasm. The enzyme catalyses (6R)-5,10-methylene-5,6,7,8-tetrahydrofolate + glycine + H2O = (6S)-5,6,7,8-tetrahydrofolate + L-serine. It participates in one-carbon metabolism; tetrahydrofolate interconversion. The protein operates within amino-acid biosynthesis; glycine biosynthesis; glycine from L-serine: step 1/1. In terms of biological role, catalyzes the reversible interconversion of serine and glycine with tetrahydrofolate (THF) serving as the one-carbon carrier. This reaction serves as the major source of one-carbon groups required for the biosynthesis of purines, thymidylate, methionine, and other important biomolecules. Also exhibits THF-independent aldolase activity toward beta-hydroxyamino acids, producing glycine and aldehydes, via a retro-aldol mechanism. The sequence is that of Serine hydroxymethyltransferase from Coxiella burnetii (strain CbuG_Q212) (Coxiella burnetii (strain Q212)).